The primary structure comprises 133 residues: Small ribosomal subunit protein uS11 (133 aa).

This sequence belongs to the universal ribosomal protein uS11 family. In terms of assembly, part of the 30S ribosomal subunit. Interacts with proteins S7 and S18. Binds to IF-3.

In terms of biological role, located on the platform of the 30S subunit, it bridges several disparate RNA helices of the 16S rRNA. Forms part of the Shine-Dalgarno cleft in the 70S ribosome. This is Small ribosomal subunit protein uS11 from Christiangramia forsetii (strain DSM 17595 / CGMCC 1.15422 / KT0803) (Gramella forsetii).